Here is a 140-residue protein sequence, read N- to C-terminus: FLYWCH family member 2 (140 aa).

Disordered stretches follow at residues 1–39 (MPLP…PRKF) and 84–140 (HPEA…GKSL). Residue S21 is modified to Phosphoserine. Over residues 98–114 (PEQKRSRQDPGTDRTED) the composition is skewed to basic and acidic residues. Residues 118–127 (AAGPPEAAGE) show a composition bias toward low complexity.

This Homo sapiens (Human) protein is FLYWCH family member 2 (FLYWCH2).